Here is a 281-residue protein sequence, read N- to C-terminus: Nucleoid occlusion protein (281 aa).

The segment at residues 145 to 164 (EALAQRLGKGQSTIANKLRL) is a DNA-binding region (H-T-H motif).

Belongs to the ParB family.

Its subcellular location is the cytoplasm. It is found in the nucleoid. Functionally, effects nucleoid occlusion by binding relatively nonspecifically to DNA and preventing the assembly of the division machinery in the vicinity of the nucleoid, especially under conditions that disturb the cell cycle. It helps to coordinate cell division and chromosome segregation by preventing the formation of the Z ring through the nucleoid, which would cause chromosome breakage. This Geobacillus sp. (strain WCH70) protein is Nucleoid occlusion protein.